A 369-amino-acid chain; its full sequence is uncharacterized protein (369 aa).

K184 is modified (N6-(pyridoxal phosphate)lysine).

Belongs to the class-V pyridoxal-phosphate-dependent aminotransferase family. Pyridoxal 5'-phosphate serves as cofactor.

This is an uncharacterized protein from Helicobacter pylori (strain ATCC 700392 / 26695) (Campylobacter pylori).